The following is a 1047-amino-acid chain: uncharacterized protein (1047 aa).

Residue Lys17 is modified to N6-acetyllysine. Disordered stretches follow at residues 172 to 208 (PPCS…GSFS) and 236 to 283 (RNSK…PQAL). At Ser208 the chain carries Phosphoserine. Residues 237-254 (NSKQAMSEGPSSPWTQLA) are compositionally biased toward polar residues. The segment covering 268–283 (HYPPPHHPPPHPPQAL) has biased composition (pro residues). Phosphoserine is present on residues Ser299 and Ser391. Thr397 is modified (phosphothreonine). 7 disordered regions span residues 448–469 (EKLQ…DSPV), 482–504 (ECQS…PVID), 519–567 (PAPE…LRGS), 668–690 (PSTP…GPIG), 714–763 (VAVA…GDSL), 931–1004 (EAGA…TLKA), and 1021–1047 (PTWG…SHHL). 3 positions are modified to phosphoserine: Ser455, Ser496, and Ser497. 2 stretches are compositionally biased toward low complexity: residues 729-741 (PARA…ARDP) and 751-762 (PAPASTSAPGDS). A phosphoserine mark is found at Ser936, Ser956, Ser988, and Ser996. Over residues 978 to 996 (AAAGEESCGASPTPATSAS) the composition is skewed to low complexity.

This is an uncharacterized protein from Homo sapiens (Human).